We begin with the raw amino-acid sequence, 443 residues long: Trigger factor (443 aa).

One can recognise a PPIase FKBP-type domain in the interval Gly-165–Ala-250.

This sequence belongs to the FKBP-type PPIase family. Tig subfamily.

Its subcellular location is the cytoplasm. It carries out the reaction [protein]-peptidylproline (omega=180) = [protein]-peptidylproline (omega=0). Involved in protein export. Acts as a chaperone by maintaining the newly synthesized protein in an open conformation. Functions as a peptidyl-prolyl cis-trans isomerase. This chain is Trigger factor, found in Ruegeria pomeroyi (strain ATCC 700808 / DSM 15171 / DSS-3) (Silicibacter pomeroyi).